Reading from the N-terminus, the 147-residue chain is Vasopressin-neurophysin 2-copeptin (147 aa).

Cysteine 1 and cysteine 6 form a disulfide bridge. Position 9 is a glycine amide (glycine 9). 7 disulfide bridges follow: cysteine 22–cysteine 66, cysteine 25–cysteine 39, cysteine 33–cysteine 56, cysteine 40–cysteine 46, cysteine 73–cysteine 85, cysteine 79–cysteine 97, and cysteine 86–cysteine 91. An N-linked (GlcNAc...) asparagine glycan is attached at asparagine 114.

It belongs to the vasopressin/oxytocin family. Interacts with vasopressin receptors V1bR/AVPR1B (Ki=85 pM), V1aR/AVPR1A (Ki=0.6 nM) and V2R/AVPR2 (Ki=4.9 nM). Interacts with oxytocin receptor (OXTR) (Ki=110 nM).

It is found in the secreted. Neurophysin 2 specifically binds vasopressin. Its function is as follows. Vasopressin has a direct antidiuretic action on the kidney, it also causes vasoconstriction of the peripheral vessels. Acts by binding to vasopressin receptors (V1bR/AVPR1B, V1aR/AVPR1A, and V2R/AVPR2). The polypeptide is Vasopressin-neurophysin 2-copeptin (AVP) (Ovis aries (Sheep)).